Reading from the N-terminus, the 236-residue chain is Phosphoribosylaminoimidazole-succinocarboxamide synthase (236 aa).

This sequence belongs to the SAICAR synthetase family.

It catalyses the reaction 5-amino-1-(5-phospho-D-ribosyl)imidazole-4-carboxylate + L-aspartate + ATP = (2S)-2-[5-amino-1-(5-phospho-beta-D-ribosyl)imidazole-4-carboxamido]succinate + ADP + phosphate + 2 H(+). Its pathway is purine metabolism; IMP biosynthesis via de novo pathway; 5-amino-1-(5-phospho-D-ribosyl)imidazole-4-carboxamide from 5-amino-1-(5-phospho-D-ribosyl)imidazole-4-carboxylate: step 1/2. This is Phosphoribosylaminoimidazole-succinocarboxamide synthase from Campylobacter jejuni subsp. jejuni serotype O:6 (strain 81116 / NCTC 11828).